The primary structure comprises 356 residues: ATP-dependent 6-phosphofructokinase (356 aa).

ATP is bound by residues Gly15, 78-79 (KG), and 115-118 (GEGT). Glu116 is a Mg(2+) binding site. Substrate contacts are provided by residues 138–140 (TID), Arg175, 182–184 (MGR), Glu235, Arg272, and 278–281 (HLQR). Asp140 functions as the Proton acceptor in the catalytic mechanism.

This sequence belongs to the phosphofructokinase type A (PFKA) family. Mixed-substrate PFK group III subfamily. Homodimer or homotetramer. Requires Mg(2+) as cofactor.

Its subcellular location is the cytoplasm. The catalysed reaction is beta-D-fructose 6-phosphate + ATP = beta-D-fructose 1,6-bisphosphate + ADP + H(+). It participates in carbohydrate degradation; glycolysis; D-glyceraldehyde 3-phosphate and glycerone phosphate from D-glucose: step 3/4. Its function is as follows. Catalyzes the phosphorylation of D-fructose 6-phosphate to fructose 1,6-bisphosphate by ATP, the first committing step of glycolysis. The sequence is that of ATP-dependent 6-phosphofructokinase from Chloroflexus aurantiacus (strain ATCC 29366 / DSM 635 / J-10-fl).